Reading from the N-terminus, the 163-residue chain is Transcription elongation factor GreB (163 aa).

Residues 54–76 are a coiled coil; it reads GKRRMREIDRRIRFLTKRLEAAV.

Belongs to the GreA/GreB family. GreB subfamily.

In terms of biological role, necessary for efficient RNA polymerase transcription elongation past template-encoded arresting sites. The arresting sites in DNA have the property of trapping a certain fraction of elongating RNA polymerases that pass through, resulting in locked ternary complexes. Cleavage of the nascent transcript by cleavage factors such as GreA or GreB allows the resumption of elongation from the new 3'terminus. GreB releases sequences of up to 9 nucleotides in length. The sequence is that of Transcription elongation factor GreB from Neisseria meningitidis serogroup B (strain ATCC BAA-335 / MC58).